The chain runs to 935 residues: Progesterone receptor (935 aa).

The tract at residues 1 to 49 (MTELKAKGLRAPHVAGSPSSPKVGSPLPCRQATGQFPGSQTSDTLPEVS) is disordered. Residues 1 to 164 (MTELKAKGLR…PATQRVLSPL (164 aa)) form an AF3; mediates transcriptional activation region. The interval 1-568 (MTELKAKGLR…YSFESLPQKI (568 aa)) is modulating, Pro-Rich. The residue at position 20 (Ser20) is a Phosphoserine. The span at 32 to 44 (ATGQFPGSQTSDT) shows a compositional bias: polar residues. The short motif at 55–59 (LDGLL) is the LXXL motif 1 element. The interval 62-158 (RICQAQDPPD…EDPPAAPATQ (97 aa)) is disordered. A Phosphoserine modification is found at Ser81. The LXXL motif 2 motif lies at 115–119 (LDTLW). A phosphoserine mark is found at Ser130 and Ser162. The tract at residues 165-305 (MSRSGGKAGD…LATTVTDFIH (141 aa)) is mediates transcriptional transrepression. The Nuclear localization signal motif lies at 183-187 (KVLPR). A disordered region spans residues 187–233 (RGLSPSRQLLLPTSGSPHWSGAPVKPSPQPAAVEVEEEDGSESEDSA). Ser190 carries the phosphoserine modification. Residues 191-203 (PSRQLLLPTSGSP) show a composition bias toward polar residues. A Phosphoserine modification is found at Ser213. Residues 220–231 (EVEEEDGSESED) are compositionally biased toward acidic residues. Ser294 is modified (phosphoserine; by MAPK1). Residues 328–365 (SYDGGSGAASAFAPPRSSPSASSTPVPGSDFPDCAYAP) are disordered. Low complexity predominate over residues 335 to 356 (AASAFAPPRSSPSASSTPVPGS). A Phosphoserine; by MAPK modification is found at Ser345. Residue Lys388 forms a Glycyl lysine isopeptide (Lys-Gly) (interchain with G-Cter in SUMO); alternate linkage. Lys388 is covalently cross-linked (Glycyl lysine isopeptide (Lys-Gly) (interchain with G-Cter in ubiquitin); alternate). The segment at 390–452 (EEEGAEASTR…PASASVSSAS (63 aa)) is disordered. The residue at position 400 (Ser400) is a Phosphoserine; by CDK2. A compositionally biased stretch (pro residues) spans 418–433 (PLGPPPPLPPRAPPSR). The segment covering 434–452 (PGEAAVTAAPASASVSSAS) has biased composition (low complexity). Residues 456–548 (STLECILYKA…VYPPYLNYLR (93 aa)) are AF1; mediates transcriptional activation. Lys533 is covalently cross-linked (Glycyl lysine isopeptide (Lys-Gly) (interchain with G-Cter in SUMO)). 2 consecutive NR C4-type zinc fingers follow at residues 569–589 (CLIC…CGSC) and 605–629 (CAGR…LRKC). The nuclear receptor DNA-binding region spans 569 to 641 (CLICGDEASG…AGMVLGGRKF (73 aa)). Residue Ser678 is modified to Phosphoserine. Residues 681–915 (QDIQLIPPLI…EFPEMMSEVI (235 aa)) enclose the NR LBD domain. Residues 689–935 (LINLLLSIEP…MVKPLLFHKK (247 aa)) are AF2; mediates transcriptional activation. Arg768 provides a ligand contact to progesterone.

The protein belongs to the nuclear hormone receptor family. In terms of assembly, interacts with SMARD1 and UNC45A. Interacts with CUEDC2; the interaction promotes ubiquitination, decreases sumoylation, and represses transcriptional activity. Interacts with PIAS3; the interaction promotes sumoylation of PR in a hormone-dependent manner, inhibits DNA-binding, and alters nuclear export. Interacts with SP1; the interaction requires ligand-induced phosphorylation on Ser-345 by ERK1/2-MAPK. Interacts with PRMT2. Interacts with NCOA2 and NCOA1. Interacts with KLF9. Interacts with GTF2B. Phosphorylated on multiple serine sites. Several of these sites are hormone-dependent. Phosphorylation on Ser-294 is highly hormone-dependent and modulates ubiquitination and sumoylation on Lys-388. Phosphorylation on Ser-345 also requires induction by hormone. Basal phosphorylation on Ser-81, Ser-162, Ser-190 and Ser-400 is increased in response to progesterone and can be phosphorylated in vitro by the CDK2-A1 complex. Increased levels of phosphorylation on Ser-400 also in the presence of EGF, heregulin, IGF, PMA and FBS. Phosphorylation at this site by CDK2 is ligand-independent, and increases nuclear translocation and transcriptional activity. Phosphorylation at Ser-162 and Ser-294, but not at Ser-190, is impaired during the G(2)/M phase of the cell cycle. Phosphorylation on Ser-345 by ERK1/2 MAPK is required for interaction with SP1. In terms of processing, sumoylation is hormone-dependent and represses transcriptional activity. Sumoylation on all three sites is enhanced by PIAS3. Desumoylated by SENP1. Sumoylation on Lys-388, the main site of sumoylation, is repressed by ubiquitination on the same site, and modulated by phosphorylation at Ser-294. Post-translationally, ubiquitination is hormone-dependent and represses sumoylation on the same site. Promoted by MAPK-mediated phosphorylation on Ser-294. Ubiquitinated by UBR5, leading to its degradation: UBR5 specifically recognizes and binds ligand-bound PGR when it is not associated with coactivators (NCOAs). In presence of NCOAs, the UBR5-degron is not accessible, preventing its ubiquitination and degradation. Palmitoylated by ZDHHC7 and ZDHHC21. Palmitoylation is required for plasma membrane targeting and for rapid intracellular signaling via ERK and AKT kinases and cAMP generation.

It is found in the nucleus. Its subcellular location is the cytoplasm. Functionally, the steroid hormones and their receptors are involved in the regulation of eukaryotic gene expression and affect cellular proliferation and differentiation in target tissues. Transcriptional activator of several progesteron-dependent promoters in a variety of cell types. Involved in activation of SRC-dependent MAPK signaling on hormone stimulation. The polypeptide is Progesterone receptor (PGR) (Sapajus apella (Brown-capped capuchin)).